Consider the following 668-residue polypeptide: Ubiquitin ligase complex F-box protein UFO1 (668 aa).

The region spanning 5–51 (GLVLQDLPPEILINIFSHLDEKDLFTLQELSTHFRNLIHDEELWKNL) is the F-box domain. Residue Ser-511 is modified to Phosphoserine. Thr-514 is subject to Phosphothreonine. UIM domains are found at residues 547–566 (DEDE…YETQ), 583–602 (EDDE…DERR), and 651–668 (NVDE…SEIN). The segment covering 564–578 (ETQTNSSANHGNNTN) has biased composition (polar residues). Disordered regions lie at residues 564-585 (ETQT…DEDD) and 599-639 (DERR…TENT).

As to quaternary structure, interacts with SKP1. Component of the probable SCF(UFO1) complex containing CDC53, SKP1, RBX1 and UFO1.

It participates in protein modification; protein ubiquitination. Its function is as follows. Substrate recognition component of a SCF (SKP1-CUL1-F-box protein) E3 ubiquitin-protein ligase complex which mediates the ubiquitination and subsequent proteasomal degradation of target proteins. Probably recognizes and binds to phosphorylated target proteins. In Saccharomyces cerevisiae (strain ATCC 204508 / S288c) (Baker's yeast), this protein is Ubiquitin ligase complex F-box protein UFO1 (UFO1).